A 289-amino-acid polypeptide reads, in one-letter code: ATP phosphoribosyltransferase (289 aa).

It belongs to the ATP phosphoribosyltransferase family. Long subfamily. Mg(2+) is required as a cofactor.

Its subcellular location is the cytoplasm. The enzyme catalyses 1-(5-phospho-beta-D-ribosyl)-ATP + diphosphate = 5-phospho-alpha-D-ribose 1-diphosphate + ATP. It participates in amino-acid biosynthesis; L-histidine biosynthesis; L-histidine from 5-phospho-alpha-D-ribose 1-diphosphate: step 1/9. Feedback inhibited by histidine. Functionally, catalyzes the condensation of ATP and 5-phosphoribose 1-diphosphate to form N'-(5'-phosphoribosyl)-ATP (PR-ATP). Has a crucial role in the pathway because the rate of histidine biosynthesis seems to be controlled primarily by regulation of HisG enzymatic activity. This is ATP phosphoribosyltransferase from Methanosarcina acetivorans (strain ATCC 35395 / DSM 2834 / JCM 12185 / C2A).